The following is a 1693-amino-acid chain: Serine protease filzig (1693 aa).

The Cytoplasmic portion of the chain corresponds to 1–47 (MFKWVTPASTATLSRCTLPATTAATTTTTAMAATRTATTTTRTTRPQ). The chain crosses the membrane as a helical; Signal-anchor for type II membrane protein span at residues 48–68 (LLSIALTSLIIIVASFVPTTS). The Extracellular portion of the chain corresponds to 69 to 1693 (GFRSIETNGG…PWLRSITGVK (1625 aa)). Disordered stretches follow at residues 170 to 198 (QQSA…QQPS), 212 to 321 (QQLD…NDDF), 352 to 465 (GLQD…THPG), and 477 to 524 (STGY…TTVS). Composition is skewed to polar residues over residues 178–198 (FESY…QQPS) and 212–222 (QQLDSSSSISP). Composition is skewed to low complexity over residues 230–241 (EPQQQEYQSESE) and 252–268 (TSSS…SSAS). The segment covering 274–294 (EPSQPADASNDQTTQKINKQP) has biased composition (polar residues). 3 stretches are compositionally biased toward low complexity: residues 358 to 404 (SSES…PTQK), 422 to 431 (QQKPQQVAKP), and 488 to 501 (EPPK…PAEQ). Over residues 502 to 524 (SYISSSTSAKRPTTGHNSPTTVS) the composition is skewed to polar residues. N541 and N582 each carry an N-linked (GlcNAc...) asparagine glycan. Disordered stretches follow at residues 615 to 635 (QDAS…PGYG), 752 to 1007 (HYNP…PPAT), and 1057 to 1090 (YAHR…TVLI). Polar residues predominate over residues 771-799 (SVSSHTTKVQEQMDETSNGYQQSETTSGY). Basic residues predominate over residues 836–847 (PRPKPSTKRPAV). Polar residues-rich tracts occupy residues 951 to 962 (QYDQPSAPSASY) and 989 to 1000 (KPISTSYVTGPS). Residues N1215 and N1272 are each glycosylated (N-linked (GlcNAc...) asparagine). 3 stretches are compositionally biased toward low complexity: residues 1297-1307 (PVRTATTTRPK), 1331-1353 (TTTR…TTRR), and 1362-1376 (RVSS…SSAR). The interval 1297 to 1435 (PVRTATTTRP…TPNLAFHSPS (139 aa)) is disordered. The segment covering 1380–1391 (DEIVDEEDEEDV) has biased composition (acidic residues). A Peptidase S1 domain is found at 1449–1691 (IVGGKGSTFG…YKPWLRSITG (243 aa)). An intrachain disulfide couples C1480 to C1496. Active-site charge relay system residues include H1495 and D1544. 2 cysteine pairs are disulfide-bonded: C1608–C1627 and C1638–C1667. S1642 serves as the catalytic Charge relay system.

It belongs to the peptidase S1 family.

The protein resides in the cell membrane. In terms of biological role, probable endopeptidase. In tracheal terminal cells, acts downstream of ich to regulate seamless tube growth and/or maintenance probably by processing lumenal matrix proteins. In Drosophila melanogaster (Fruit fly), this protein is Serine protease filzig.